Here is a 287-residue protein sequence, read N- to C-terminus: ATP synthase gamma chain (287 aa).

The protein belongs to the ATPase gamma chain family. As to quaternary structure, F-type ATPases have 2 components, CF(1) - the catalytic core - and CF(0) - the membrane proton channel. CF(1) has five subunits: alpha(3), beta(3), gamma(1), delta(1), epsilon(1). CF(0) has three main subunits: a, b and c.

Its subcellular location is the cell inner membrane. Functionally, produces ATP from ADP in the presence of a proton gradient across the membrane. The gamma chain is believed to be important in regulating ATPase activity and the flow of protons through the CF(0) complex. The sequence is that of ATP synthase gamma chain from Escherichia fergusonii (strain ATCC 35469 / DSM 13698 / CCUG 18766 / IAM 14443 / JCM 21226 / LMG 7866 / NBRC 102419 / NCTC 12128 / CDC 0568-73).